The chain runs to 608 residues: Amino-acid acetyltransferase, mitochondrial (608 aa).

Positions 402–604 (LNLITEHEKG…DICTRIEPSL (203 aa)) constitute an N-acetyltransferase domain.

It belongs to the acetyltransferase family.

It localises to the mitochondrion. The catalysed reaction is L-glutamate + acetyl-CoA = N-acetyl-L-glutamate + CoA + H(+). It participates in amino-acid biosynthesis; L-arginine biosynthesis; N(2)-acetyl-L-ornithine from L-glutamate: step 1/4. N-acetylglutamate synthase involved in arginine biosynthesis. The protein is Amino-acid acetyltransferase, mitochondrial (ARG2) of Yarrowia lipolytica (strain CLIB 122 / E 150) (Yeast).